The chain runs to 404 residues: Cysteine--tRNA ligase (404 aa).

C14 provides a ligand contact to Zn(2+). The 'HIGH' region motif lies at 16-26; it reads PTVYSDVHIGN. Zn(2+) is bound by residues C190, H216, and E220. The short motif at 248-252 is the 'KMSKS' region element; it reads KMAKS. An ATP-binding site is contributed by K251.

This sequence belongs to the class-I aminoacyl-tRNA synthetase family. In terms of assembly, monomer. Zn(2+) serves as cofactor.

It localises to the cytoplasm. The enzyme catalyses tRNA(Cys) + L-cysteine + ATP = L-cysteinyl-tRNA(Cys) + AMP + diphosphate. The sequence is that of Cysteine--tRNA ligase from Mesomycoplasma hyopneumoniae (strain 232) (Mycoplasma hyopneumoniae).